Here is a 243-residue protein sequence, read N- to C-terminus: 1-(5-phosphoribosyl)-5-[(5-phosphoribosylamino)methylideneamino] imidazole-4-carboxamide isomerase (243 aa).

Aspartate 8 functions as the Proton acceptor in the catalytic mechanism. Aspartate 128 functions as the Proton donor in the catalytic mechanism.

It belongs to the HisA/HisF family.

The protein localises to the cytoplasm. It catalyses the reaction 1-(5-phospho-beta-D-ribosyl)-5-[(5-phospho-beta-D-ribosylamino)methylideneamino]imidazole-4-carboxamide = 5-[(5-phospho-1-deoxy-D-ribulos-1-ylimino)methylamino]-1-(5-phospho-beta-D-ribosyl)imidazole-4-carboxamide. Its pathway is amino-acid biosynthesis; L-histidine biosynthesis; L-histidine from 5-phospho-alpha-D-ribose 1-diphosphate: step 4/9. This is 1-(5-phosphoribosyl)-5-[(5-phosphoribosylamino)methylideneamino] imidazole-4-carboxamide isomerase from Opitutus terrae (strain DSM 11246 / JCM 15787 / PB90-1).